The primary structure comprises 202 residues: Diadenylate cyclase (202 aa).

The helical transmembrane segment at 6–26 (VFSVIILVLLFLILALTLLFV) threads the bilayer. Positions 29 to 185 (NKRTRSFVIR…RGVIKTLSSN (157 aa)) constitute a DAC domain.

This sequence belongs to the adenylate cyclase family. DacB/CdaS subfamily. As to quaternary structure, probably oligomerizes.

It localises to the cell membrane. It carries out the reaction 2 ATP = 3',3'-c-di-AMP + 2 diphosphate. Its function is as follows. Catalyzes the condensation of 2 ATP molecules into cyclic di-AMP (c-di-AMP), a second messenger used to regulate differing processes in different bacteria. The protein is Diadenylate cyclase of Mycoplasma pneumoniae (strain ATCC 29342 / M129 / Subtype 1) (Mycoplasmoides pneumoniae).